Here is a 323-residue protein sequence, read N- to C-terminus: Voltage-dependent calcium channel gamma-2 subunit (323 aa).

Residues methionine 10–threonine 30 form a helical membrane-spanning segment. Residue asparagine 48 is glycosylated (N-linked (GlcNAc...) asparagine). 3 helical membrane passes run serine 104–alanine 124, isoleucine 134–isoleucine 154, and phenylalanine 182–isoleucine 202. A disordered region spans residues tyrosine 233–asparagine 261. Serine 253 bears the Phosphoserine mark. Phosphotyrosine is present on tyrosine 271. At threonine 321 the chain carries Phosphothreonine.

It belongs to the PMP-22/EMP/MP20 family. CACNG subfamily. The L-type calcium channel is composed of five subunits: alpha-1, alpha-2/delta, beta and gamma. Interacts with the PDZ domains of DLG4/PSD-95 and DLG1/SAP97. May interact with GOPC. Acts as an auxiliary subunit for AMPA-selective glutamate receptors (AMPARs). Found in a complex with GRIA1, GRIA2, GRIA3, GRIA4, CNIH2, CNIH3, CACNG3, CACNG4, CACNG5, CACNG7 and CACNG8. Interacts with GRIA1 and GRIA2. Interacts with MPP2. In terms of processing, phosphorylation of Thr-321 impairs interaction with DLG1 and DLG4. As to expression, brain.

The protein resides in the membrane. The protein localises to the synapse. It is found in the synaptosome. Its function is as follows. Regulates the trafficking and gating properties of AMPA-selective glutamate receptors (AMPARs). Promotes their targeting to the cell membrane and synapses and modulates their gating properties by slowing their rates of activation, deactivation and desensitization. Does not show subunit-specific AMPA receptor regulation and regulates all AMPAR subunits. Thought to stabilize the calcium channel in an inactivated (closed) state. The chain is Voltage-dependent calcium channel gamma-2 subunit (CACNG2) from Homo sapiens (Human).